A 75-amino-acid polypeptide reads, in one-letter code: Small ribosomal subunit protein bS18 (75 aa).

It belongs to the bacterial ribosomal protein bS18 family. As to quaternary structure, part of the 30S ribosomal subunit. Forms a tight heterodimer with protein bS6.

Functionally, binds as a heterodimer with protein bS6 to the central domain of the 16S rRNA, where it helps stabilize the platform of the 30S subunit. This chain is Small ribosomal subunit protein bS18, found in Ruegeria sp. (strain TM1040) (Silicibacter sp.).